The sequence spans 792 residues: DEAD-box ATP-dependent RNA helicase 40 (792 aa).

Residues 1-16 show a composition bias toward low complexity; sequence MSAGTAPAAPRYAPDD. Disordered stretches follow at residues 1–25 and 44–118; these read MSAG…PWRG and TQYE…PLPA. In terms of domain architecture, WW spans 17 to 51; sequence PSLPKPWRGLVDGTTGYLYYWNPETNITQYEKPLP. Residues 52–68 show a composition bias toward pro residues; sequence PEDQLPPPPPLPPPPPR. 2 stretches are compositionally biased toward basic and acidic residues: residues 70–80 and 88–108; these read GRGDRDRDRRD and PRRD…DHRS. The short motif at 150–178 is the Q motif element; the sequence is TSFETGGFPPEILKEIQRAGFSSPTPIQA. One can recognise a Helicase ATP-binding domain in the interval 181–355; it reads WPIALQCQDV…EDLLVHPVQV (175 aa). Residue 194–201 participates in ATP binding; that stretch reads AKTGSGKT. A DEAD box motif is present at residues 303-306; it reads DEAD. In terms of domain architecture, Helicase C-terminal spans 384 to 528; sequence RLEQILRSQD…RVPRDLADMA (145 aa). Residues 523–792 form a disordered region; it reads DLADMASRGG…NATVQNGGDN (270 aa). 2 stretches are compositionally biased toward basic and acidic residues: residues 543–560 and 572–588; these read TRSD…RYGG and DSSR…DGRS. 2 stretches are compositionally biased toward basic residues: residues 589-599 and 609-654; these read RRSGRGRSRSR and RSPK…RRHE. Positions 668–708 are enriched in basic and acidic residues; it reads GHGERKRTPEADPSRNHTNHSDPKDDRHPEDGKVGKVDLDR. A compositionally biased stretch (polar residues) spans 725–739; it reads GKTSRSVSPGNQVEG. The span at 764–777 shows a compositional bias: acidic residues; it reads DEEEGMIDEDGEIA.

This sequence belongs to the DEAD box helicase family. DDX5/DBP2 subfamily.

It is found in the nucleus. The enzyme catalyses ATP + H2O = ADP + phosphate + H(+). Functionally, ATP-dependent RNA helicase involved nonsense-mediated mRNA decay and ribosome biogenesis through rRNA processing. The protein is DEAD-box ATP-dependent RNA helicase 40 of Oryza sativa subsp. japonica (Rice).